A 60-amino-acid chain; its full sequence is Large ribosomal subunit protein bL32 (60 aa).

Residues 1–60 (MAVQQNKKSRSARDMRRSHDALEPNALSVEKSTGEVHLRHHVSPDGFYRGRKVIDKGADE) form a disordered region. Over residues 11 to 22 (SARDMRRSHDAL) the composition is skewed to basic and acidic residues.

This sequence belongs to the bacterial ribosomal protein bL32 family.

The protein is Large ribosomal subunit protein bL32 of Stutzerimonas stutzeri (strain A1501) (Pseudomonas stutzeri).